Reading from the N-terminus, the 367-residue chain is MAKESKLTAGVAAALTVVAACALCLLLPATARAQLRVGFYDTSCPNAEALVRQAVAAAFAKDAGIAAGLIRLHFHDCFVRGCDGSVLLTVNPGGGQTERDALPNNPSLRGFDVIDAAKTAVEQSCPRTVSCADIVAFAARDSISLTGSVSYQVPAGRRDGRVSNATETVDLPPPTSTAQSLTDLFKAKELSVEDMVVLSGAHTVGRSFCASFFKRVWNTSTNPATAIVDAGLSPSYAQLLRALCPSNTTQTTPITTAMDPGTPNVLDNNYYKLLPRGMGLFFSDNQLRVNPQMAALVSSFASNETLWKEKFAAAMVKMGRIQVQTGTCGEVRLNCGVVNPSLYSSSSAVELGSSAPAAVGEEGYAAS.

The signal sequence occupies residues 1–33; it reads MAKESKLTAGVAAALTVVAACALCLLLPATARA. Q34 carries the post-translational modification Pyrrolidone carboxylic acid. Disulfide bonds link C44-C125, C77-C82, C131-C335, and C209-C244. H75 serves as the catalytic Proton acceptor. Residues D76, V79, G81, D83, and S85 each coordinate Ca(2+). N-linked (GlcNAc...) asparagine glycosylation occurs at N164. Residue P172 participates in substrate binding. H202 lines the heme b pocket. T203 serves as a coordination point for Ca(2+). Residues N218 and N247 are each glycosylated (N-linked (GlcNAc...) asparagine). 3 residues coordinate Ca(2+): D259, T262, and D267. A glycan (N-linked (GlcNAc...) asparagine) is linked at N303.

It belongs to the peroxidase family. Classical plant (class III) peroxidase subfamily. It depends on heme b as a cofactor. The cofactor is Ca(2+). Expressed in the root tip meristems.

The protein resides in the secreted. It is found in the vacuole. It catalyses the reaction 2 a phenolic donor + H2O2 = 2 a phenolic radical donor + 2 H2O. In terms of biological role, removal of H(2)O(2), oxidation of toxic reductants, biosynthesis and degradation of lignin, suberization, auxin catabolism, response to environmental stresses such as wounding, pathogen attack and oxidative stress. These functions might be dependent on each isozyme/isoform in each plant tissue. This chain is Peroxidase 1 (PER1), found in Zea mays (Maize).